The primary structure comprises 842 residues: Protein translocase subunit SecA 1 (842 aa).

Residues Gln-85, 103 to 107 (GEGKT), and Asp-493 each bind ATP. Residues Cys-824, Cys-826, Cys-835, and His-836 each contribute to the Zn(2+) site.

Belongs to the SecA family. In terms of assembly, monomer and homodimer. Part of the essential Sec protein translocation apparatus which comprises SecA, SecYEG and auxiliary proteins SecDF. Other proteins may also be involved. Zn(2+) is required as a cofactor.

It localises to the cell membrane. Its subcellular location is the cytoplasm. It carries out the reaction ATP + H2O + cellular proteinSide 1 = ADP + phosphate + cellular proteinSide 2.. Part of the Sec protein translocase complex. Interacts with the SecYEG preprotein conducting channel. Has a central role in coupling the hydrolysis of ATP to the transfer of proteins into and across the cell membrane, serving as an ATP-driven molecular motor driving the stepwise translocation of polypeptide chains across the membrane. The sequence is that of Protein translocase subunit SecA 1 from Streptococcus agalactiae serotype Ia (strain ATCC 27591 / A909 / CDC SS700).